A 741-amino-acid chain; its full sequence is NAD(P)H-quinone oxidoreductase subunit 5, chloroplastic (741 aa).

A run of 15 helical transmembrane segments spans residues 9 to 29 (WIIPLLPLTVTMLIGLGLLLF), 40 to 60 (WAVPSVLFLSIGMLLSVELAI), 89 to 109 (IDPLTSIMSILITTVGILVLI), 125 to 145 (FSYLSFFNASMLGLVTSSNLI), 147 to 167 (IYIFWELVGMCSYLLIGFWFA), 185 to 205 (GDFGLLLGILGLYWITGSFEF), 219 to 239 (NGVNSLFATLCAFLLFLGAVA), 258 to 278 (TPISALIHAATMVAAGIFLVA), 280 to 300 (LLPLFIVIPYIMNLISLIGVI), 327 to 347 (LGYIMLAPGIGSYRTALFHLI), 396 to 416 (TTFFWGTLSLCGIPPLACFWS), 425 to 445 (WLYSPIFAIIAYATAGLTAFY), 547 to 567 (LLPLLLLGLFTWFVGLIGIPF), 606 to 626 (ILSVSISVFGIFTASLLYGSV), and 721 to 741 (SYIFYYSSYVLIFVLIFYFFI).

Belongs to the complex I subunit 5 family. In terms of assembly, NDH is composed of at least 16 different subunits, 5 of which are encoded in the nucleus.

The protein localises to the plastid. It is found in the chloroplast thylakoid membrane. The catalysed reaction is a plastoquinone + NADH + (n+1) H(+)(in) = a plastoquinol + NAD(+) + n H(+)(out). It carries out the reaction a plastoquinone + NADPH + (n+1) H(+)(in) = a plastoquinol + NADP(+) + n H(+)(out). Its function is as follows. NDH shuttles electrons from NAD(P)H:plastoquinone, via FMN and iron-sulfur (Fe-S) centers, to quinones in the photosynthetic chain and possibly in a chloroplast respiratory chain. The immediate electron acceptor for the enzyme in this species is believed to be plastoquinone. Couples the redox reaction to proton translocation, and thus conserves the redox energy in a proton gradient. This Ceratophyllum demersum (Rigid hornwort) protein is NAD(P)H-quinone oxidoreductase subunit 5, chloroplastic (ndhF).